A 92-amino-acid chain; its full sequence is Transcription factor PRE4 (92 aa).

Residues 5-60 (KSRSRQTGASMITDEQINDLVLQLHRLLPELANNRRSGKVSASRVLQETCSYIRNL) form the bHLH domain.

Belongs to the bHLH protein family. In terms of assembly, interacts with HFR1 and IBH1. As to expression, expressed in roots, leaves, stems and flowers.

Its subcellular location is the nucleus. Atypical and probable non DNA-binding bHLH transcription factor that integrates multiple signaling pathways to regulate cell elongation and plant development. Regulates light responses by binding and inhibiting the activity of the bHLH transcription factor HFR1, a critical regulator of light signaling and shade avoidance. May have a regulatory role in various aspects of gibberellin-dependent growth and development. The polypeptide is Transcription factor PRE4 (PRE4) (Arabidopsis thaliana (Mouse-ear cress)).